A 149-amino-acid polypeptide reads, in one-letter code: Protein RhiC (149 aa).

An N-terminal signal peptide occupies residues 1–23 (MTATLRAFGWLAAFALTVTFAQG).

It is found in the periplasm. Its function is as follows. May be involved in plant-microbe interaction. In Rhizobium leguminosarum bv. viciae, this protein is Protein RhiC (rhiC).